Here is a 225-residue protein sequence, read N- to C-terminus: UPF0173 metal-dependent hydrolase Pars_0810 (225 aa).

This sequence belongs to the UPF0173 family.

The chain is UPF0173 metal-dependent hydrolase Pars_0810 from Pyrobaculum arsenaticum (strain DSM 13514 / JCM 11321 / PZ6).